A 245-amino-acid polypeptide reads, in one-letter code: Thiopurine S-methyltransferase (245 aa).

Ser-14 bears the Phosphoserine mark. 29 to 40 (WQDKWVNGNTAF) is an S-adenosyl-L-methionine binding site. Phe-40 is a substrate binding site. Lys-58 is subject to N6-acetyllysine. S-adenosyl-L-methionine-binding positions include Leu-69, Glu-90, 134-135 (SI), and Arg-152.

It belongs to the class I-like SAM-binding methyltransferase superfamily. TPMT family. Monomer.

It localises to the cytoplasm. The catalysed reaction is S-adenosyl-L-methionine + a thiopurine = S-adenosyl-L-homocysteine + a thiopurine S-methylether.. The chain is Thiopurine S-methyltransferase (TPMT) from Pongo pygmaeus (Bornean orangutan).